The primary structure comprises 325 residues: Methionyl-tRNA formyltransferase (325 aa).

113-116 (SLLP) contacts (6S)-5,6,7,8-tetrahydrofolate.

The protein belongs to the Fmt family.

The catalysed reaction is L-methionyl-tRNA(fMet) + (6R)-10-formyltetrahydrofolate = N-formyl-L-methionyl-tRNA(fMet) + (6S)-5,6,7,8-tetrahydrofolate + H(+). In terms of biological role, attaches a formyl group to the free amino group of methionyl-tRNA(fMet). The formyl group appears to play a dual role in the initiator identity of N-formylmethionyl-tRNA by promoting its recognition by IF2 and preventing the misappropriation of this tRNA by the elongation apparatus. The polypeptide is Methionyl-tRNA formyltransferase (Chromohalobacter salexigens (strain ATCC BAA-138 / DSM 3043 / CIP 106854 / NCIMB 13768 / 1H11)).